Reading from the N-terminus, the 329-residue chain is DNA-directed RNA polymerase subunit alpha (329 aa).

The segment at 1–233 is alpha N-terminal domain (alpha-NTD); it reads MVREKVKVST…NLFIPFLHVE (233 aa). An alpha C-terminal domain (alpha-CTD) region spans residues 266 to 329; the sequence is TKELAFQYIF…KKILDILEKK (64 aa).

Belongs to the RNA polymerase alpha chain family. In plastids the minimal PEP RNA polymerase catalytic core is composed of four subunits: alpha, beta, beta', and beta''. When a (nuclear-encoded) sigma factor is associated with the core the holoenzyme is formed, which can initiate transcription.

Its subcellular location is the plastid. It localises to the chloroplast. It catalyses the reaction RNA(n) + a ribonucleoside 5'-triphosphate = RNA(n+1) + diphosphate. Its function is as follows. DNA-dependent RNA polymerase catalyzes the transcription of DNA into RNA using the four ribonucleoside triphosphates as substrates. The chain is DNA-directed RNA polymerase subunit alpha from Arabidopsis thaliana (Mouse-ear cress).